The sequence spans 247 residues: MVDREQLVQKARLAEQAERYDDMAAAMKNVTELNEPLSNEERNLLSVAYKNVVGARRSSWRVISSIEQKTSADGNEKKIEMVRAYREKIEKELGAVCQDVLSLLDNYLIKNCSETQYESKVFYLKMKGDYYRYLAEVATGEKRATVVESSEKAYSEAHEISKEHMQPTHPIRLGLALNYSVFYYEIQNAPEQACHLAKTAFDDAIAELDTLNEDSYKDSTLIMQLLRDNLTLWTSDQQDDDGGEGNN.

This sequence belongs to the 14-3-3 family. Homodimer, and heterodimer with other family members.

The protein resides in the cytoplasm. Its function is as follows. Adapter protein implicated in the regulation of a large spectrum of both general and specialized signaling pathways. Binds to a large number of partners, usually by recognition of a phosphoserine or phosphothreonine motif. Binding generally results in the modulation of the activity of the binding partner. The sequence is that of 14-3-3 protein gamma (YWHAG) from Gallus gallus (Chicken).